The following is a 101-amino-acid chain: NADH-quinone oxidoreductase subunit K (101 aa).

Helical transmembrane passes span 4 to 24, 30 to 50, and 61 to 81; these read LSHY…GIFL, IILL…FVAF, and IFVF…LAIL.

Belongs to the complex I subunit 4L family. As to quaternary structure, NDH-1 is composed of 14 different subunits. Subunits NuoA, H, J, K, L, M, N constitute the membrane sector of the complex.

It is found in the cell inner membrane. The catalysed reaction is a quinone + NADH + 5 H(+)(in) = a quinol + NAD(+) + 4 H(+)(out). Functionally, NDH-1 shuttles electrons from NADH, via FMN and iron-sulfur (Fe-S) centers, to quinones in the respiratory chain. The immediate electron acceptor for the enzyme in this species is believed to be ubiquinone. Couples the redox reaction to proton translocation (for every two electrons transferred, four hydrogen ions are translocated across the cytoplasmic membrane), and thus conserves the redox energy in a proton gradient. The protein is NADH-quinone oxidoreductase subunit K of Nitrosomonas eutropha (strain DSM 101675 / C91 / Nm57).